We begin with the raw amino-acid sequence, 98 residues long: NADH-ubiquinone oxidoreductase chain 4L (98 aa).

The next 3 helical transmembrane spans lie at 2-22 (PSIF…TLVF), 29-49 (SLLC…LIIL), and 61-81 (ILLL…LVMV).

The protein belongs to the complex I subunit 4L family. Core subunit of respiratory chain NADH dehydrogenase (Complex I) which is composed of 45 different subunits.

It localises to the mitochondrion inner membrane. The catalysed reaction is a ubiquinone + NADH + 5 H(+)(in) = a ubiquinol + NAD(+) + 4 H(+)(out). Functionally, core subunit of the mitochondrial membrane respiratory chain NADH dehydrogenase (Complex I) which catalyzes electron transfer from NADH through the respiratory chain, using ubiquinone as an electron acceptor. Part of the enzyme membrane arm which is embedded in the lipid bilayer and involved in proton translocation. This chain is NADH-ubiquinone oxidoreductase chain 4L (MT-ND4L), found in Propithecus diadema diadema (Diademed sifaka).